An 846-amino-acid chain; its full sequence is MPKRKNSGQSTDLNSRSPKTIDEALRILAPPQALLVQSQLNLTAPANPFSIQKAPGTSSDNEQRAPKRRADEEAVNAVPKNLLTTSSTFARAVIPAAPAISSANNKMAPQSVTATAKTTTNRGKVSGEGEYQLIKNEVLCSPYGNQYEVLEFLGKGTFGQVVKAWKKGTSEIVAIKILKKHPSYARQGQIEVSILSRLSNENSEEFNFVRAFECFNHKSHTCLVFEMLEQNLYDFLKQNKFMPLPLNAIRPILFQVLTALLKLKSLGLIHADLKPENIMLVDPQQQPYRVKVIDFGSASHRSKAVTNTYLQSRYYRAPEIILGLPFNESIDMWSLGCVIAELFLGWPLYPGSSEYDQIRFIIQTQGLPPTSMLESASKLHRFFKEVKSESPNHTNVGGSYYRLKTVEEYEASSSTAKSKETRKYIFNVIDDISRVCYGFESDPVEHLCDRIDRQEFVDVLKKMLVLNPDFRITPAEGLESKFVTMTHINGYNFANYVHEAHKRMEICRKPGPAMATPYRAANVATPITPVEKPPAPKLQQPMIAVLPQLNQIAATNIPPVPTQPDLTNLMHHYSQMAAATGSAATAAQFFYQPLPPAPLFQYAQLHHPFAARPPHFLSLATPSHMVPQFVPVPIMDPSMLQGQWPPGAAQQFAVLANDIMRVPAPQGINQMFASTPQTFSLPQFLSSSIPSATTAFNGNAPNIPFPEENSSWALGTAAQQQQQQAQRAQSMINGNVKVKPLAAQPKKNSPAPSVITLSSDEDSNGAGSSNSGSTTRTGAVNPVRNDTLPMGNTIKTEDILVPPTTFDGQLPNLQYFPGSHLFDPKTVAGLLPNPFLDTSHIPRAFN.

Positions 47–74 (NPFSIQKAPGTSSDNEQRAPKRRADEEA) are disordered. Residues 61–72 (NEQRAPKRRADE) are compositionally biased toward basic and acidic residues. In terms of domain architecture, Protein kinase spans 147-483 (YEVLEFLGKG…PAEGLESKFV (337 aa)). Residues 153–161 (LGKGTFGQV) and Lys176 contribute to the ATP site. The active-site Proton acceptor is the Asp272. A disordered region spans residues 741-790 (LAAQPKKNSPAPSVITLSSDEDSNGAGSSNSGSTTRTGAVNPVRNDTLPM). Polar residues predominate over residues 746–757 (KKNSPAPSVITL). Positions 764–773 (NGAGSSNSGS) are enriched in low complexity.

Belongs to the protein kinase superfamily. CMGC Ser/Thr protein kinase family. HIPK subfamily. In terms of tissue distribution, broadly expressed during embryogenesis. Expression becomes more restricted during larval development. L3 larvae display robust expression in many head and motor neurons, and lower levels of expression in the intestine and the seam cells of the hypodermis. By late L4 stage, expression is largely restricted to neurons and is maintained in nerve cells of the head and nerve cord during adulthood. Expressed in adult pharyngeal cells, hypodermal cells, gonadal sheath cells and distal tip cells but not in germline cells. Expressed in serotonergic neurons such as ADF and NSM and in GABAergic neurons, including RME, RIS and DVB.

The protein resides in the nucleus. It carries out the reaction L-seryl-[protein] + ATP = O-phospho-L-seryl-[protein] + ADP + H(+). The catalysed reaction is L-threonyl-[protein] + ATP = O-phospho-L-threonyl-[protein] + ADP + H(+). Functionally, serine/threonine-protein kinase required in the somatic gonadal cells to regulate germline proliferation during larval development and in adulthood. Plays a role in the development/differentiation of gonadal distal tip cells. Required for normal lifespan in a pha-4 and mxl-2-dependent manner. Also contributes to survival following heat or oxidative stress. Prevents sumoylation and inactivation of heat shock transcription factor hsf-1 which enhances hsf-1-dependent transcriptional induction of chaperones in response to heat shock. Also required for hormetic extension of longevity in response to heat stress. Also contributes to longevity by promoting autophagy under nutrient stress conditions through induction of autophagosome formation and autophagy gene expression. Provides protection against proteotoxic polyglutamine aggregate and the associated locomotory toxicity, probably as a result of kinase activity. Contributes to longevity via gamma-aminobutyric acid (GABA)ergic signaling by promoting autophagy through mxl-2, hlh-30 and daf-16 but independent of hsf-1 and phas-4, to induce autophagosome formation and the expression of autophagy genes. Promotes thermotolerance via serotonergic signaling by serotonergic neurons. Preserves neuronal function in aging animals by mitigating against age-associated decline in axonal and synaptic transmissions. Acts as an activator of nhr-49-dependent hypoxia response, including the up-regulation of fmo-2 and acs-2, the induction of autophagosome formation and expression of autophagy genes. The polypeptide is Homeodomain-interacting protein kinase 1 (Caenorhabditis elegans).